Reading from the N-terminus, the 108-residue chain is UPF0060 membrane protein BH2744 (108 aa).

The next 4 membrane-spanning stretches (helical) occupy residues 6–26 (TLFL…WLWL), 31–51 (PVYL…IATF), 60–80 (VYAA…WWID), and 86–106 (TYDW…LWAP).

It belongs to the UPF0060 family.

It localises to the cell membrane. The chain is UPF0060 membrane protein BH2744 from Halalkalibacterium halodurans (strain ATCC BAA-125 / DSM 18197 / FERM 7344 / JCM 9153 / C-125) (Bacillus halodurans).